Reading from the N-terminus, the 158-residue chain is SsrA-binding protein (158 aa).

The tract at residues 133-158 (KIHDKRETEAKRDWNRQKQRLLKDNA) is disordered. The segment covering 136–158 (DKRETEAKRDWNRQKQRLLKDNA) has biased composition (basic and acidic residues).

It belongs to the SmpB family.

The protein resides in the cytoplasm. Required for rescue of stalled ribosomes mediated by trans-translation. Binds to transfer-messenger RNA (tmRNA), required for stable association of tmRNA with ribosomes. tmRNA and SmpB together mimic tRNA shape, replacing the anticodon stem-loop with SmpB. tmRNA is encoded by the ssrA gene; the 2 termini fold to resemble tRNA(Ala) and it encodes a 'tag peptide', a short internal open reading frame. During trans-translation Ala-aminoacylated tmRNA acts like a tRNA, entering the A-site of stalled ribosomes, displacing the stalled mRNA. The ribosome then switches to translate the ORF on the tmRNA; the nascent peptide is terminated with the 'tag peptide' encoded by the tmRNA and targeted for degradation. The ribosome is freed to recommence translation, which seems to be the essential function of trans-translation. In Ruegeria pomeroyi (strain ATCC 700808 / DSM 15171 / DSS-3) (Silicibacter pomeroyi), this protein is SsrA-binding protein.